Reading from the N-terminus, the 466-residue chain is Phosphoenolpyruvate carboxykinase (ATP) (466 aa).

3 residues coordinate substrate: arginine 61, tyrosine 196, and lysine 202. ATP-binding positions include lysine 202, histidine 221, and glycine 237–threonine 245. Residues lysine 202 and histidine 221 each contribute to the Mn(2+) site. Position 258 (aspartate 258) interacts with Mn(2+). 3 residues coordinate ATP: glutamate 286, arginine 323, and threonine 448. Arginine 323 lines the substrate pocket.

The protein belongs to the phosphoenolpyruvate carboxykinase (ATP) family. The cofactor is Mn(2+).

The protein resides in the cytoplasm. It carries out the reaction oxaloacetate + ATP = phosphoenolpyruvate + ADP + CO2. It functions in the pathway carbohydrate biosynthesis; gluconeogenesis. Functionally, involved in the gluconeogenesis. Catalyzes the conversion of oxaloacetate (OAA) to phosphoenolpyruvate (PEP) through direct phosphoryl transfer between the nucleoside triphosphate and OAA. This Deinococcus radiodurans (strain ATCC 13939 / DSM 20539 / JCM 16871 / CCUG 27074 / LMG 4051 / NBRC 15346 / NCIMB 9279 / VKM B-1422 / R1) protein is Phosphoenolpyruvate carboxykinase (ATP).